The chain runs to 198 residues: Probable molybdenum cofactor guanylyltransferase (198 aa).

GTP is bound by residues 11–13, Lys-23, Asp-71, and Asp-102; that span reads LAG. Position 102 (Asp-102) interacts with Mg(2+).

Belongs to the MobA family. Mg(2+) is required as a cofactor.

It localises to the cytoplasm. The enzyme catalyses Mo-molybdopterin + GTP + H(+) = Mo-molybdopterin guanine dinucleotide + diphosphate. In terms of biological role, transfers a GMP moiety from GTP to Mo-molybdopterin (Mo-MPT) cofactor (Moco or molybdenum cofactor) to form Mo-molybdopterin guanine dinucleotide (Mo-MGD) cofactor. The chain is Probable molybdenum cofactor guanylyltransferase from Halalkalibacterium halodurans (strain ATCC BAA-125 / DSM 18197 / FERM 7344 / JCM 9153 / C-125) (Bacillus halodurans).